The primary structure comprises 1881 residues: Nuclear pore membrane glycoprotein 210-like (1881 aa).

The N-terminal stretch at 1-32 is a signal peptide; the sequence is MIAFGAPRRRSFGLLFSLAPHLFFLFLIGTLA. Residues Asn-80, Asn-344, and Asn-808 are each glycosylated (N-linked (GlcNAc...) asparagine). The BIG2 domain maps to 1078–1150; sequence FPPFRLIPEK…TIQTVNEDTG (73 aa). Asn-1441 carries an N-linked (GlcNAc...) asparagine glycan. A helical membrane pass occupies residues 1804–1824; it reads YQILLFTLFAVLASTSFIFLA.

It belongs to the NUP210 family. Expressed in testis.

It is found in the nucleus membrane. Its subcellular location is the nucleus. The protein localises to the nucleoplasm. This Mus musculus (Mouse) protein is Nuclear pore membrane glycoprotein 210-like (Nup210l).